Reading from the N-terminus, the 475-residue chain is ATP synthase subunit beta (475 aa).

G154–T161 contributes to the ATP binding site.

The protein belongs to the ATPase alpha/beta chains family. In terms of assembly, F-type ATPases have 2 components, CF(1) - the catalytic core - and CF(0) - the membrane proton channel. CF(1) has five subunits: alpha(3), beta(3), gamma(1), delta(1), epsilon(1). CF(0) has three main subunits: a(1), b(2) and c(9-12). The alpha and beta chains form an alternating ring which encloses part of the gamma chain. CF(1) is attached to CF(0) by a central stalk formed by the gamma and epsilon chains, while a peripheral stalk is formed by the delta and b chains.

Its subcellular location is the cell inner membrane. It catalyses the reaction ATP + H2O + 4 H(+)(in) = ADP + phosphate + 5 H(+)(out). Its function is as follows. Produces ATP from ADP in the presence of a proton gradient across the membrane. The catalytic sites are hosted primarily by the beta subunits. This chain is ATP synthase subunit beta, found in Hyphomonas neptunium (strain ATCC 15444).